The sequence spans 268 residues: Shikimate dehydrogenase (NADP(+)) (268 aa).

Shikimate-binding positions include 15–17 (SKS) and Thr60. Catalysis depends on Lys64, which acts as the Proton acceptor. Shikimate is bound by residues Asn85 and Asp101. NADP(+)-binding positions include 121 to 125 (GAGGS) and Leu208. Tyr210 is a shikimate binding site. An NADP(+)-binding site is contributed by Gly230.

It belongs to the shikimate dehydrogenase family. In terms of assembly, homodimer.

The catalysed reaction is shikimate + NADP(+) = 3-dehydroshikimate + NADPH + H(+). It functions in the pathway metabolic intermediate biosynthesis; chorismate biosynthesis; chorismate from D-erythrose 4-phosphate and phosphoenolpyruvate: step 4/7. In terms of biological role, involved in the biosynthesis of the chorismate, which leads to the biosynthesis of aromatic amino acids. Catalyzes the reversible NADPH linked reduction of 3-dehydroshikimate (DHSA) to yield shikimate (SA). The polypeptide is Shikimate dehydrogenase (NADP(+)) (Helicobacter hepaticus (strain ATCC 51449 / 3B1)).